The chain runs to 1005 residues: Mitogen-activated protein kinase kinase kinase 10 (1005 aa).

The SH3 domain maps to 32–96 (VSNPLWMAVF…PSNYVVSDDK (65 aa)). The Protein kinase domain occupies 118-380 (LNLDEIIGVG…SCILEQLTTI (263 aa)). ATP-binding positions include 124–132 (IGVGGFGKV) and Lys145. Asp242 serves as the catalytic Proton acceptor. Leucine-zipper stretches follow at residues 404–425 (IQQM…EEEL) and 439–460 (LKRR…ELNI). Disordered regions lie at residues 551 to 611 (SVLK…KHTP), 647 to 676 (QSDH…QSRR), 712 to 736 (FQWA…GEDS), and 758 to 940 (RSLI…AEGA). Basic and acidic residues-rich tracts occupy residues 576-588 (QKER…RLKT) and 648-658 (SDHRSHPEDTA). Basic and acidic residues-rich tracts occupy residues 761–786 (IRSD…EDRG) and 799–809 (YKVESFKRDPK). The segment covering 810-826 (QSLTPTHVTVGRNNTTE) has biased composition (polar residues). A compositionally biased stretch (pro residues) spans 862–879 (EPSPFPRLPDPHFVFPPP). The span at 915-940 (SLSQTHSSSPSSGGGDACSSGSAEGA) shows a compositional bias: low complexity.

It belongs to the protein kinase superfamily. STE Ser/Thr protein kinase family. MAP kinase kinase kinase subfamily. Homodimer. Binds to the GTPase rac1 but not cdc42 or rhoA. Interacts (via kinase domain) with pak1 (via kinase domain). Interacts with the ubiquitin-conjugating enzyme ube2d4. It depends on Mg(2+) as a cofactor. Autophosphorylation on serine and threonine residues within the activation loop plays a role in enzyme activation. In terms of processing, mono- and poly-ubiquitinated. In terms of tissue distribution, in adults, strongly expressed in the brain and spleen with lower levels in pancreas, heart, muscle and kidney (at protein level). In the developing embryo, expressed at stage 22 in the cement gland. Weakly expressed in the pronephros from stage 24 or 25, with expression increasing in strength by stage 30 and continuing at least until stage 37. Expression in the developing pronephros correlates with epithelialization of the proximal pronephric tubules.

The enzyme catalyses L-seryl-[protein] + ATP = O-phospho-L-seryl-[protein] + ADP + H(+). It catalyses the reaction L-threonyl-[protein] + ATP = O-phospho-L-threonyl-[protein] + ADP + H(+). Homodimerization via the leucine zipper domains is required for autophosphorylation and subsequent activation. In terms of biological role, activates the JUN N-terminal pathway. Essential for pronephros and cement gland development. The protein is Mitogen-activated protein kinase kinase kinase 10 (map3k10) of Xenopus laevis (African clawed frog).